A 434-amino-acid polypeptide reads, in one-letter code: Glutamyl-tRNA reductase (434 aa).

Substrate is bound by residues 49 to 52 (TCNR), S109, 114 to 116 (EPQ), and Q120. The active-site Nucleophile is the C50. Residue 189–194 (GAGEMC) coordinates NADP(+).

It belongs to the glutamyl-tRNA reductase family. In terms of assembly, homodimer.

The enzyme catalyses (S)-4-amino-5-oxopentanoate + tRNA(Glu) + NADP(+) = L-glutamyl-tRNA(Glu) + NADPH + H(+). The protein operates within porphyrin-containing compound metabolism; protoporphyrin-IX biosynthesis; 5-aminolevulinate from L-glutamyl-tRNA(Glu): step 1/2. Catalyzes the NADPH-dependent reduction of glutamyl-tRNA(Glu) to glutamate 1-semialdehyde (GSA). This Citrifermentans bemidjiense (strain ATCC BAA-1014 / DSM 16622 / JCM 12645 / Bem) (Geobacter bemidjiensis) protein is Glutamyl-tRNA reductase.